Here is a 310-residue protein sequence, read N- to C-terminus: Probable cell division protein WhiA (310 aa).

Residues 274-308 constitute a DNA-binding region (H-T-H motif); the sequence is SLKELGTLVPGGPISKSGINHRLRKINQFAEQLQK.

This sequence belongs to the WhiA family.

In terms of biological role, involved in cell division and chromosome segregation. The protein is Probable cell division protein WhiA of Lactiplantibacillus plantarum (strain ATCC BAA-793 / NCIMB 8826 / WCFS1) (Lactobacillus plantarum).